A 176-amino-acid polypeptide reads, in one-letter code: Urease accessory protein UreE (176 aa).

The tract at residues 134–176 (FTPEGGAYGHGRTHAHEHGHTNHHGQHHDHADHGHSHDHSHDQ) is disordered. Positions 161–176 (HDHADHGHSHDHSHDQ) are enriched in basic and acidic residues.

This sequence belongs to the UreE family.

Its subcellular location is the cytoplasm. Involved in urease metallocenter assembly. Binds nickel. Probably functions as a nickel donor during metallocenter assembly. The protein is Urease accessory protein UreE of Ruegeria sp. (strain TM1040) (Silicibacter sp.).